A 173-amino-acid chain; its full sequence is Alpha-crystallin A chain (173 aa).

At Met-1 the chain carries N-acetylmethionine. The segment at 1-63 (MDITIQHPWF…RTVLESGISE (63 aa)) is required for complex formation with BFSP1 and BFSP2. Deamidated glutamine; partial is present on Gln-6. A Phosphoserine modification is found at Ser-45. Gln-50 is modified (deamidated glutamine; partial). Positions 52 to 164 (LFRTVLESGI…SDRSIPVSRE (113 aa)) constitute a sHSP domain. An N6-acetyllysine modification is found at Lys-99. Residues His-100, Glu-102, and His-107 each contribute to the Zn(2+) site. Phosphoserine is present on Ser-122. Deamidated asparagine; partial is present on Asn-123. Residues 144–173 (PKIHSNMESSHSDRSIPVSREEKPTLAPSS) are disordered. A compositionally biased stretch (basic and acidic residues) spans 153-167 (SHSDRSIPVSREEKP). His-154 serves as a coordination point for Zn(2+). Ser-162 carries an O-linked (GlcNAc) serine glycan.

Belongs to the small heat shock protein (HSP20) family. Heteromer composed of three CRYAA and one CRYAB subunits. Inter-subunit bridging via zinc ions enhances stability, which is crucial as there is no protein turn over in the lens. Can also form homodimers and homotetramers (dimers of dimers) which serve as the building blocks of homooligomers. Within homooligomers, the zinc-binding motif is created from residues of 3 different molecules. His-100 and Glu-102 from one molecule are ligands of the zinc ion, and His-107 and His-154 residues from additional molecules complete the site with tetrahedral coordination geometry. Part of a complex required for lens intermediate filament formation composed of BFSP1, BFSP2 and CRYAA. Acetylation at Lys-99 may increase chaperone activity. Post-translationally, undergoes age-dependent proteolytical cleavage at the C-terminus.

The protein localises to the cytoplasm. The protein resides in the nucleus. Contributes to the transparency and refractive index of the lens. Acts as a chaperone, preventing aggregation of various proteins under a wide range of stress conditions. Required for the correct formation of lens intermediate filaments as part of a complex composed of BFSP1, BFSP2 and CRYAA. The polypeptide is Alpha-crystallin A chain (CRYAA) (Didelphis virginiana (North American opossum)).